Consider the following 85-residue polypeptide: Large ribosomal subunit protein bL27 (85 aa).

The segment at M1–F26 is disordered.

Belongs to the bacterial ribosomal protein bL27 family.

The polypeptide is Large ribosomal subunit protein bL27 (Roseiflexus sp. (strain RS-1)).